The chain runs to 163 residues: Probable ribosome biogenesis protein RLP24 (163 aa).

The protein belongs to the eukaryotic ribosomal protein eL24 family. As to quaternary structure, associated with nucleolar and cytoplasmic pre-60S particles. At the end of biogenesis it dissociates from cytoplasmic pre-60S particles and is likely to be exchanged for its ribosomal homolog, RPL24.

It localises to the nucleus. Its subcellular location is the nucleolus. Its function is as follows. Involved in the biogenesis of the 60S ribosomal subunit. Ensures the docking of GTPBP4/NOG1 to pre-60S particles. In Bos taurus (Bovine), this protein is Probable ribosome biogenesis protein RLP24 (RSL24D1).